Here is a 251-residue protein sequence, read N- to C-terminus: Alanyl-tRNA editing protein AlaX-M (251 aa).

His107, His111, Cys210, and His214 together coordinate Zn(2+).

It belongs to the class-II aminoacyl-tRNA synthetase family. Editing domain AlaX-M subfamily. Requires Zn(2+) as cofactor.

It localises to the cytoplasm. Functionally, functions in trans to edit the amino acid moiety from mischarged Ser-tRNA(Ala). Recognition depends, at least in part, on the acceptor stem of tRNA(Ala). In Methanosarcina mazei (strain ATCC BAA-159 / DSM 3647 / Goe1 / Go1 / JCM 11833 / OCM 88) (Methanosarcina frisia), this protein is Alanyl-tRNA editing protein AlaX-M (alaXM).